The chain runs to 218 residues: Runt-related transcription factor 2 (218 aa).

Residues 67–195 (RGHKFYLEKK…TVDGPREPRR (129 aa)) enclose the Runt domain. A required for interaction with FOXO1 region spans residues 122-138 (VMAGNDENYSAELRNAS). Positions 189–218 (GPREPRRHRQKLDDSKPSLFSDRLSDLGRI) are disordered. A Glycyl lysine isopeptide (Lys-Gly) (interchain with G-Cter in SUMO2) cross-link involves residue Lys-204.

In terms of assembly, heterodimer of an alpha and a beta subunit. The alpha subunit binds DNA as a monomer and through the Runt domain. DNA-binding is increased by heterodimerization. Interacts with XRCC6 (Ku70) and XRCC5 (Ku80). Interacts with CCNB1, KAT6A and KAT6B. Interacts with HIVEP3. Interacts with IFI204. Interaction with SATB2; the interaction results in enhanced DNA binding and transactivation by these transcription factors. Binds to HIPK3. Interacts with FOXO1 (via a C-terminal region); the interaction inhibits RUNX2 transcriptional activity towards BGLAP. Interacts with FOXP3. Interacts with TMEM119. Interacts with OLFM2. Interacts with IPO7; the interaction inhibits RUNX2 nuclear translocation in osteoblasts. Post-translationally, phosphorylated; probably by MAP kinases (MAPK). Phosphorylation by HIPK3 is required for the SPEN/MINT and FGF2 transactivation during osteoblastic differentiation.

The protein resides in the nucleus. Its subcellular location is the cytoplasm. Transcription factor involved in osteoblastic differentiation and skeletal morphogenesis. Essential for the maturation of osteoblasts and both intramembranous and endochondral ossification. CBF binds to the core site, 5'-PYGPYGGT-3', of a number of enhancers and promoters, including murine leukemia virus, polyomavirus enhancer, T-cell receptor enhancers, osteocalcin, osteopontin, bone sialoprotein, alpha 1(I) collagen, LCK, IL-3 and GM-CSF promoters. Inhibits KAT6B-dependent transcriptional activation. In osteoblasts, supports transcription activation: synergizes with SPEN/MINT to enhance FGFR2-mediated activation of the osteocalcin FGF-responsive element (OCFRE). This is Runt-related transcription factor 2 (Runx2) from Rattus norvegicus (Rat).